The following is a 130-amino-acid chain: Small ribosomal subunit protein uS8 (130 aa).

This sequence belongs to the universal ribosomal protein uS8 family. Part of the 30S ribosomal subunit. Contacts proteins S5 and S12.

One of the primary rRNA binding proteins, it binds directly to 16S rRNA central domain where it helps coordinate assembly of the platform of the 30S subunit. The chain is Small ribosomal subunit protein uS8 from Pasteurella multocida (strain Pm70).